The following is a 603-amino-acid chain: Myotubularin (603 aa).

Phosphoserine occurs at positions 13 and 18. The region spanning 29 to 97 is the GRAM domain; sequence QDVSETVPRL…GVISRIEKMG (69 aa). In terms of domain architecture, Myotubularin phosphatase spans 163–538; the sequence is GWTVYNPVEE…RHLELWVNYY (376 aa). N288, N313, and I314 together coordinate a 1,2-diacyl-sn-glycero-3-phospho-(1D-myo-inositol-3,5-bisphosphate). A 1,2-diacyl-sn-glycero-3-phospho-(1D-myo-inositol-3-phosphate) is bound by residues N288, N313, and I314. C375 acts as the Phosphocysteine intermediate in catalysis. A 1,2-diacyl-sn-glycero-3-phospho-(1D-myo-inositol-3,5-bisphosphate) is bound by residues S376, D377, G378, W379, D380, R381, K417, and R421. 6 residues coordinate a 1,2-diacyl-sn-glycero-3-phospho-(1D-myo-inositol-3-phosphate): S376, D377, G378, W379, D380, and R381. R421 is a binding site for a 1,2-diacyl-sn-glycero-3-phospho-(1D-myo-inositol-3-phosphate). The residue at position 495 (T495) is a Phosphothreonine. The residue at position 588 (S588) is a Phosphoserine.

It belongs to the protein-tyrosine phosphatase family. Non-receptor class myotubularin subfamily. In terms of assembly, heterodimer with MTMR12. Interacts with KMT2A/MLL1 (via SET domain). Interacts with DES in skeletal muscle but not in cardiac muscle. Interacts with SPEG. In terms of tissue distribution, widely expressed with highest levels detected in heart and muscle and low levels in brain (at protein level). Expressed in skeletal muscles (at protein level).

The protein resides in the cytoplasm. It localises to the cell membrane. Its subcellular location is the cell projection. It is found in the filopodium. The protein localises to the ruffle. The protein resides in the late endosome. It localises to the myofibril. Its subcellular location is the sarcomere. The catalysed reaction is a 1,2-diacyl-sn-glycero-3-phospho-(1D-myo-inositol-3-phosphate) + H2O = a 1,2-diacyl-sn-glycero-3-phospho-(1D-myo-inositol) + phosphate. The enzyme catalyses a 1,2-diacyl-sn-glycero-3-phospho-(1D-myo-inositol-3,5-bisphosphate) + H2O = a 1,2-diacyl-sn-glycero-3-phospho-(1D-myo-inositol-5-phosphate) + phosphate. It carries out the reaction 1,2-dioctanoyl-sn-glycero-3-phospho-(1-D-myo-inositol-3-phosphate) + H2O = 1,2-dioctanoyl-sn-glycero-3-phospho-(1D-myo-inositol) + phosphate. It catalyses the reaction 1,2-dioctanoyl-sn-glycero-3-phospho-(1D-myo-inositol-3,5-bisphosphate) + H2O = 1,2-dioctanoyl-sn-glycero-3-phospho-(1D-myo-inositol-5-phosphate) + phosphate. The catalysed reaction is 1,2-dihexadecanoyl-sn-glycero-3-phospho-(1D-myo-inositol-3,5-phosphate) + H2O = 1,2-dihexadecanoyl-sn-glycero-3-phospho-(1D-myo-inositol-5-phosphate) + phosphate. Allosterically activated by phosphatidylinositol 5-phosphate (PI5P). In terms of biological role, lipid phosphatase which dephosphorylates phosphatidylinositol 3-monophosphate (PI3P) and phosphatidylinositol 3,5-bisphosphate (PI(3,5)P2). Has also been shown to dephosphorylate phosphotyrosine- and phosphoserine-containing peptides. Negatively regulates EGFR degradation through regulation of EGFR trafficking from the late endosome to the lysosome. Plays a role in vacuolar formation and morphology. Regulates desmin intermediate filament assembly and architecture. Plays a role in mitochondrial morphology and positioning. Required for skeletal muscle maintenance but not for myogenesis. In skeletal muscles, stabilizes MTMR12 protein levels. The sequence is that of Myotubularin from Mus musculus (Mouse).